The following is a 100-amino-acid chain: Urease subunit gamma (100 aa).

Belongs to the urease gamma subunit family. As to quaternary structure, heterotrimer of UreA (gamma), UreB (beta) and UreC (alpha) subunits. Three heterotrimers associate to form the active enzyme. The apoenzyme interacts with an accessory complex composed of UreD, UreF and UreG, which is required for the assembly of the nickel containing metallocenter of UreC. The UreE protein may also play a direct role as a metallochaperone in nickel transfer to the urease apoprotein.

It is found in the cytoplasm. It carries out the reaction urea + 2 H2O + H(+) = hydrogencarbonate + 2 NH4(+). Its pathway is nitrogen metabolism; urea degradation; CO(2) and NH(3) from urea (urease route): step 1/1. The apoenzyme can be activated in vitro in the presence of nickel ions and carbon dioxide, which promotes carbamylation of 'Lys-217' of the UreC (alpha) subunit. The sequence is that of Urease subunit gamma from Klebsiella aerogenes (Enterobacter aerogenes).